The chain runs to 97 residues: Aspartyl/glutamyl-tRNA(Asn/Gln) amidotransferase subunit C (97 aa).

The protein belongs to the GatC family. Heterotrimer of A, B and C subunits.

The catalysed reaction is L-glutamyl-tRNA(Gln) + L-glutamine + ATP + H2O = L-glutaminyl-tRNA(Gln) + L-glutamate + ADP + phosphate + H(+). It catalyses the reaction L-aspartyl-tRNA(Asn) + L-glutamine + ATP + H2O = L-asparaginyl-tRNA(Asn) + L-glutamate + ADP + phosphate + 2 H(+). Allows the formation of correctly charged Asn-tRNA(Asn) or Gln-tRNA(Gln) through the transamidation of misacylated Asp-tRNA(Asn) or Glu-tRNA(Gln) in organisms which lack either or both of asparaginyl-tRNA or glutaminyl-tRNA synthetases. The reaction takes place in the presence of glutamine and ATP through an activated phospho-Asp-tRNA(Asn) or phospho-Glu-tRNA(Gln). This chain is Aspartyl/glutamyl-tRNA(Asn/Gln) amidotransferase subunit C, found in Prochlorococcus marinus (strain MIT 9313).